The chain runs to 119 residues: uncharacterized protein (119 aa).

The next 2 membrane-spanning stretches (helical) occupy residues 57–77 and 80–100; these read FSHH…SILF and YIFV…FILH.

Its subcellular location is the membrane. This is an uncharacterized protein from Saccharomyces cerevisiae (strain ATCC 204508 / S288c) (Baker's yeast).